An 86-amino-acid chain; its full sequence is Large ribosomal subunit protein uL23 (86 aa).

The protein belongs to the universal ribosomal protein uL23 family. Part of the 50S ribosomal subunit. Contacts protein L29.

In terms of biological role, binds to 23S rRNA. One of the proteins that surrounds the polypeptide exit tunnel on the outside of the ribosome. The chain is Large ribosomal subunit protein uL23 from Pyrococcus abyssi (strain GE5 / Orsay).